A 455-amino-acid polypeptide reads, in one-letter code: Golgi pH regulator (455 aa).

Transmembrane regions (helical) follow at residues 5 to 25 (IDSSIMVTSQILFFGFGWLFF), 46 to 66 (VTFAFSCTMFELIIFEILGVL), 79 to 99 (LCVILLILVFMVPFYIGYFIV), 114 to 134 (CLLWLTFMYFFWKLGDPFPIL), and 150 to 170 (VGVIGVTLMALLSGFGAVNCP). Residues Asn-180 and Asn-243 are each glycosylated (N-linked (GlcNAc...) asparagine). Helical transmembrane passes span 290–310 (GYFFSIYCVWKIFMATINIVL), 343–363 (ISFILVGIIIVSSIRGLLITL), 378–398 (VIVLLLAQIMGMYFVSSVLLI), and 425–445 (WFDVIFLVSALSSILFLYLAH).

This sequence belongs to the Golgi pH regulator (TC 1.A.38) family. In terms of assembly, homotrimer. Interacts with RABL3; the interaction stabilizes GPR89B.

The protein localises to the golgi apparatus membrane. It catalyses the reaction iodide(out) = iodide(in). The catalysed reaction is chloride(in) = chloride(out). It carries out the reaction bromide(in) = bromide(out). The enzyme catalyses fluoride(in) = fluoride(out). Functionally, voltage-gated channel that enables the transfer of anions such as iodide, chloride, bromide and fluoride which may function in counter-ion conductance and participates in Golgi acidification. Plays a role in lymphocyte development, probably by acting as a RABL3 effector in hematopoietic cells. This is Golgi pH regulator from Cricetulus griseus (Chinese hamster).